The sequence spans 336 residues: Nicotinate-nucleotide--dimethylbenzimidazole phosphoribosyltransferase (336 aa).

Residues 20 to 41 (GPDAAARAGAEERNGQLTKPPG) form a disordered region. Catalysis depends on E304, which acts as the Proton acceptor.

It belongs to the CobT family.

It catalyses the reaction 5,6-dimethylbenzimidazole + nicotinate beta-D-ribonucleotide = alpha-ribazole 5'-phosphate + nicotinate + H(+). Its pathway is nucleoside biosynthesis; alpha-ribazole biosynthesis; alpha-ribazole from 5,6-dimethylbenzimidazole: step 1/2. Its function is as follows. Catalyzes the synthesis of alpha-ribazole-5'-phosphate from nicotinate mononucleotide (NAMN) and 5,6-dimethylbenzimidazole (DMB). The protein is Nicotinate-nucleotide--dimethylbenzimidazole phosphoribosyltransferase of Ruegeria pomeroyi (strain ATCC 700808 / DSM 15171 / DSS-3) (Silicibacter pomeroyi).